The following is a 365-amino-acid chain: 3-dehydroquinate synthase (365 aa).

NAD(+) contacts are provided by residues 106 to 110 (GVIGD), 130 to 131 (TT), lysine 142, lysine 151, and 169 to 172 (FFAT). Zn(2+)-binding residues include glutamate 184, histidine 247, and histidine 264.

It belongs to the sugar phosphate cyclases superfamily. Dehydroquinate synthase family. The cofactor is Co(2+). Requires Zn(2+) as cofactor. NAD(+) is required as a cofactor.

The protein localises to the cytoplasm. It catalyses the reaction 7-phospho-2-dehydro-3-deoxy-D-arabino-heptonate = 3-dehydroquinate + phosphate. The protein operates within metabolic intermediate biosynthesis; chorismate biosynthesis; chorismate from D-erythrose 4-phosphate and phosphoenolpyruvate: step 2/7. Functionally, catalyzes the conversion of 3-deoxy-D-arabino-heptulosonate 7-phosphate (DAHP) to dehydroquinate (DHQ). The sequence is that of 3-dehydroquinate synthase from Listeria monocytogenes serotype 4a (strain HCC23).